A 389-amino-acid chain; its full sequence is GTPase Obg (389 aa).

In terms of domain architecture, Obg spans 1 to 159 (MKFVDEAVIR…RSLKLELMLL (159 aa)). The tract at residues 122–144 (FHGLGNTRFKSSTNRAPRQKTLG) is disordered. In terms of domain architecture, OBG-type G spans 160-333 (ADVGLLGMPN…LSLKLIDFIE (174 aa)). Residues 166 to 173 (GMPNAGKS), 191 to 195 (FTTLV), 213 to 216 (DIPG), 283 to 286 (NKTD), and 314 to 316 (SAY) each bind GTP. 2 residues coordinate Mg(2+): Ser173 and Thr193.

This sequence belongs to the TRAFAC class OBG-HflX-like GTPase superfamily. OBG GTPase family. As to quaternary structure, monomer. It depends on Mg(2+) as a cofactor.

The protein localises to the cytoplasm. Functionally, an essential GTPase which binds GTP, GDP and possibly (p)ppGpp with moderate affinity, with high nucleotide exchange rates and a fairly low GTP hydrolysis rate. Plays a role in control of the cell cycle, stress response, ribosome biogenesis and in those bacteria that undergo differentiation, in morphogenesis control. This is GTPase Obg from Shewanella woodyi (strain ATCC 51908 / MS32).